The chain runs to 347 residues: Probable 3-hydroxyisobutyrate dehydrogenase, mitochondrial (347 aa).

The N-terminal 34 residues, 1–34 (MAIRRAQTLLCLSKFKTNFVSGSLHRFSSSSQNS), are a transit peptide targeting the mitochondrion. NAD(+)-binding positions include 38 to 67 (QNVG…TVHD), 101 to 102 (LP), and Thr-134. The active site involves Lys-219. Lys-294 serves as a coordination point for NAD(+).

The protein belongs to the HIBADH-related family. 3-hydroxyisobutyrate dehydrogenase subfamily.

It localises to the mitochondrion. The catalysed reaction is 3-hydroxy-2-methylpropanoate + NAD(+) = 2-methyl-3-oxopropanoate + NADH + H(+). It participates in amino-acid degradation; L-valine degradation. This Arabidopsis thaliana (Mouse-ear cress) protein is Probable 3-hydroxyisobutyrate dehydrogenase, mitochondrial.